A 322-amino-acid chain; its full sequence is 3-alpha-hydroxysteroid dehydrogenase (322 aa).

A Blocked amino end (Met) modification is found at M1. Residues 20-24 (GFGTT) and D50 each bind NADP(+). Y55 (proton donor) is an active-site residue. H117 is a binding site for substrate. NADP(+) contacts are provided by residues 166–167 (SN), Q190, and 216–221 (YCTLGS). A substrate-binding site is contributed by W227. 270–280 (RSFNAKRIKEL) serves as a coordination point for NADP(+).

It belongs to the aldo/keto reductase family. Monomer. As to expression, in brain, highest levels found in olfactory bulb. Moderate levels present in cerebellum, cerebral cortex, hypothalamus and pituitary. Low levels present in amygdala, brain stem, caudate putamen, cingulate cortex, hippocampus, midbrain, and thalamus.

It localises to the cytoplasm. The enzyme catalyses a 3alpha-hydroxysteroid + NADP(+) = a 3-oxosteroid + NADPH + H(+). The catalysed reaction is a 3alpha-hydroxysteroid + NAD(+) = a 3-oxosteroid + NADH + H(+). Potently inhibited by the nonsteroidal anti-inflammatory drugs (NSAID). In terms of biological role, besides being a 3-alpha-hydroxysteroid dehydrogenase, the enzyme can accomplish diverse functions: as quinone reductase, as an aromatic alcohol dehydrogenase, as dihydrodiol dehydrogenase, and as 9-, 11-, and 15-hydroxyprostaglandin dehydrogenase. In Rattus norvegicus (Rat), this protein is 3-alpha-hydroxysteroid dehydrogenase (Akr1c9).